The chain runs to 317 residues: Cytochrome f (317 aa).

The first 31 residues, M1 to A31, serve as a signal peptide directing secretion. The heme site is built by Y32, C52, C55, and H56. The chain crosses the membrane as a helical span at residues P280–V302.

Belongs to the cytochrome f family. In terms of assembly, the 4 large subunits of the cytochrome b6-f complex are cytochrome b6, subunit IV (17 kDa polypeptide, petD), cytochrome f and the Rieske protein, while the 4 small subunits are PetG, PetL, PetM and PetN. The complex functions as a dimer. The cofactor is heme.

It is found in the plastid. Its subcellular location is the chloroplast thylakoid membrane. In terms of biological role, component of the cytochrome b6-f complex, which mediates electron transfer between photosystem II (PSII) and photosystem I (PSI), cyclic electron flow around PSI, and state transitions. The protein is Cytochrome f of Chlamydomonas subcaudata.